The following is a 502-amino-acid chain: Glycerol kinase (502 aa).

Position 14 (T14) interacts with ADP. ATP is bound by residues T14, T15, and S16. T14 provides a ligand contact to sn-glycerol 3-phosphate. An ADP-binding site is contributed by R18. R84, E85, Y136, and D246 together coordinate sn-glycerol 3-phosphate. Glycerol contacts are provided by R84, E85, Y136, D246, and Q247. T268 and G311 together coordinate ADP. The ATP site is built by T268, G311, Q315, and G412. G412 and N416 together coordinate ADP.

It belongs to the FGGY kinase family. Homotetramer and homodimer (in equilibrium). Heterodimer with EIIA-Glc. Binds 1 zinc ion per glycerol kinase EIIA-Glc dimer. The zinc ion is important for dimerization.

The catalysed reaction is glycerol + ATP = sn-glycerol 3-phosphate + ADP + H(+). It functions in the pathway polyol metabolism; glycerol degradation via glycerol kinase pathway; sn-glycerol 3-phosphate from glycerol: step 1/1. With respect to regulation, activity of this regulatory enzyme is affected by several metabolites. Allosterically and non-competitively inhibited by fructose 1,6-bisphosphate (FBP) and unphosphorylated phosphocarrier protein EIIA-Glc (III-Glc), an integral component of the bacterial phosphotransferase (PTS) system. Its function is as follows. Key enzyme in the regulation of glycerol uptake and metabolism. Catalyzes the phosphorylation of glycerol to yield sn-glycerol 3-phosphate. The protein is Glycerol kinase of Citrobacter koseri (strain ATCC BAA-895 / CDC 4225-83 / SGSC4696).